The primary structure comprises 107 residues: Holo-[acyl-carrier-protein] synthase (107 aa).

Mg(2+) contacts are provided by D10 and E54.

This sequence belongs to the P-Pant transferase superfamily. AcpS family. Mg(2+) serves as cofactor.

The protein resides in the cytoplasm. It catalyses the reaction apo-[ACP] + CoA = holo-[ACP] + adenosine 3',5'-bisphosphate + H(+). Its function is as follows. Transfers the 4'-phosphopantetheine moiety from coenzyme A to a Ser of acyl-carrier-protein. This chain is Holo-[acyl-carrier-protein] synthase, found in Mycoplasma mobile (strain ATCC 43663 / 163K / NCTC 11711) (Mesomycoplasma mobile).